Here is a 426-residue protein sequence, read N- to C-terminus: Antigen EM13 (426 aa).

In terms of domain architecture, F-BAR spans 1–240; sequence MIQERADIEK…TVAKVDADAD (240 aa). 2 disordered regions span residues 287-315 and 350-369; these read LTSL…ISTS and ISKE…FVDD. Residues 305–315 show a composition bias toward polar residues; it reads TTDSGSNISTS. In terms of domain architecture, SH3 spans 371–426; that stretch reads RPGVPIRALYDYVGVEADELSFNSGDLFEKLEDEDEQGWCKGRKDGRVGLYPRQLR.

The sequence is that of Antigen EM13 (EM13) from Echinococcus multilocularis (Fox tapeworm).